A 306-amino-acid polypeptide reads, in one-letter code: tRNA pseudouridine synthase B (306 aa).

Aspartate 43 acts as the Nucleophile in catalysis.

This sequence belongs to the pseudouridine synthase TruB family. Type 1 subfamily.

It catalyses the reaction uridine(55) in tRNA = pseudouridine(55) in tRNA. Its function is as follows. Responsible for synthesis of pseudouridine from uracil-55 in the psi GC loop of transfer RNAs. The protein is tRNA pseudouridine synthase B of Lacticaseibacillus casei (strain BL23) (Lactobacillus casei).